The sequence spans 192 residues: Leucine-rich repeat-containing protein 51 (192 aa).

3 LRR repeats span residues 49-71 (SLTQ…NQVV), 80-101 (NLAW…LTTF), and 103-124 (NLSV…NKLA). Positions 137–175 (NPIEEEKGYRQYVLCNLPRITTFDFSGVTKADRSTAEVW) constitute an LRRCT domain.

It is found in the cytoplasm. This is Leucine-rich repeat-containing protein 51 from Rattus norvegicus (Rat).